Here is a 243-residue protein sequence, read N- to C-terminus: Large ribosomal subunit protein uL2 (243 aa).

Positions 202–243 are disordered; the sequence is HGGGRHQHVGQSSTVSRNAPPGAKVGSIAARKTGRAKIKDRR. The span at 233–243 shows a compositional bias: basic residues; sequence KTGRAKIKDRR.

This sequence belongs to the universal ribosomal protein uL2 family. Part of the 50S ribosomal subunit. Forms a bridge to the 30S subunit in the 70S ribosome.

In terms of biological role, one of the primary rRNA binding proteins. Required for association of the 30S and 50S subunits to form the 70S ribosome, for tRNA binding and peptide bond formation. It has been suggested to have peptidyltransferase activity; this is somewhat controversial. Makes several contacts with the 16S rRNA in the 70S ribosome. This chain is Large ribosomal subunit protein uL2, found in Cenarchaeum symbiosum (strain A).